The following is a 335-amino-acid chain: Probable calcium-binding protein CML49 (335 aa).

Residues methionine 1 to glycine 10 are compositionally biased toward low complexity. Residues methionine 1–alanine 154 are disordered. Residues asparagine 30–tyrosine 45 show a composition bias toward pro residues. Positions glycine 46–proline 63 are enriched in low complexity. Residues aspartate 110 to glycine 141 show a composition bias toward gly residues. 2 EF-hand domains span residues glycine 164–serine 199 and phenylalanine 230–serine 265. Residues aspartate 177, aspartate 179, serine 181, glutamate 188, aspartate 243, aspartate 245, serine 247, arginine 249, and glutamate 254 each contribute to the Ca(2+) site.

Its function is as follows. Potential calcium sensor. The sequence is that of Probable calcium-binding protein CML49 (CML49) from Arabidopsis thaliana (Mouse-ear cress).